Reading from the N-terminus, the 480-residue chain is ATP-dependent rRNA helicase RRP3 (480 aa).

2 stretches are compositionally biased toward basic and acidic residues: residues 1–17 (MAKA…KEES) and 33–46 (DTTK…EPKK). The segment at 1-63 (MAKATEKRVK…VEVDESEEQT (63 aa)) is disordered. The Q motif motif lies at 64 to 92 (KTFKDLGVIDSICETCEELKFTKPTPIQA). Residues 95-266 (IPYALEGRDI…RASLVDPVRV (172 aa)) form the Helicase ATP-binding domain. Position 108-115 (108-115 (AQTGSGKT)) interacts with ATP. Residues 214-217 (DEAD) carry the DEAD box motif. The Helicase C-terminal domain occupies 277-437 (NLLQYMVFCP…SYPLESEAVM (161 aa)). A disordered region spans residues 450–480 (AIQEMKGEDGTKKRSKFDKKRRRDEMDIGEQ). The span at 462-471 (KRSKFDKKRR) shows a compositional bias: basic residues.

The protein belongs to the DEAD box helicase family. DDX47/RRP3 subfamily. Interacts with the SSU processome.

The protein resides in the nucleus. It carries out the reaction ATP + H2O = ADP + phosphate + H(+). ATP-dependent rRNA helicase required for pre-ribosomal RNA processing. Involved in the maturation of the 35S-pre-rRNA and to its cleavage to mature 18S rRNA. The protein is ATP-dependent rRNA helicase RRP3 of Yarrowia lipolytica (strain CLIB 122 / E 150) (Yeast).